Reading from the N-terminus, the 152-residue chain is Protein-export protein SecB (152 aa).

This sequence belongs to the SecB family. In terms of assembly, homotetramer, a dimer of dimers. One homotetramer interacts with 1 SecA dimer.

It is found in the cytoplasm. Functionally, one of the proteins required for the normal export of preproteins out of the cell cytoplasm. It is a molecular chaperone that binds to a subset of precursor proteins, maintaining them in a translocation-competent state. It also specifically binds to its receptor SecA. This Thiobacillus denitrificans (strain ATCC 25259 / T1) protein is Protein-export protein SecB.